The primary structure comprises 135 residues: MSLTLRVLAPDQSVFDGSADEVILPSTTGQVGILPGHVSLLAALDVGVLRVRTNSNWQSIALMGGFAEVESDDVTVLVNSAELGVNIDSTSAESDLSAARTAVTKLEGQPSTPEKVKAQQLFQRARARAQASKST.

The disordered stretch occupies residues 101–122 (TAVTKLEGQPSTPEKVKAQQLF).

This sequence belongs to the ATPase epsilon chain family. In terms of assembly, F-type ATPases have 2 components, CF(1) - the catalytic core - and CF(0) - the membrane proton channel. CF(1) has five subunits: alpha(3), beta(3), gamma(1), delta(1), epsilon(1). CF(0) has three main subunits: a, b and c.

The protein resides in the cellular thylakoid membrane. Its function is as follows. Produces ATP from ADP in the presence of a proton gradient across the membrane. The chain is ATP synthase epsilon chain from Synechococcus sp. (strain CC9311).